The sequence spans 860 residues: DNA mismatch repair protein MutS (860 aa).

ATP is bound at residue glycine 607 to serine 614.

Belongs to the DNA mismatch repair MutS family.

Its function is as follows. This protein is involved in the repair of mismatches in DNA. It is possible that it carries out the mismatch recognition step. This protein has a weak ATPase activity. The sequence is that of DNA mismatch repair protein MutS from Listeria innocua serovar 6a (strain ATCC BAA-680 / CLIP 11262).